The chain runs to 912 residues: Type II beta methyltransferase M.BslI (912 aa).

Belongs to the N(4)/N(6)-methyltransferase family. N(4) subfamily.

The enzyme catalyses a 2'-deoxycytidine in DNA + S-adenosyl-L-methionine = an N(4)-methyl-2'-deoxycytidine in DNA + S-adenosyl-L-homocysteine + H(+). A beta subtype methylase. Recognizes the double-stranded sequence 5'-CCN(7)GG-3', methylates C-2 on both strands, and protects the DNA from cleavage by the BslI endonuclease. This Bacillus sp. (strain NEB-606) protein is Type II beta methyltransferase M.BslI (bslIM).